The primary structure comprises 1374 residues: DNA-directed RNA polymerase subunit beta (1374 aa).

It belongs to the RNA polymerase beta chain family. In terms of assembly, the RNAP catalytic core consists of 2 alpha, 1 beta, 1 beta' and 1 omega subunit. When a sigma factor is associated with the core the holoenzyme is formed, which can initiate transcription.

The catalysed reaction is RNA(n) + a ribonucleoside 5'-triphosphate = RNA(n+1) + diphosphate. DNA-dependent RNA polymerase catalyzes the transcription of DNA into RNA using the four ribonucleoside triphosphates as substrates. This is DNA-directed RNA polymerase subunit beta from Rickettsia prowazekii (strain Madrid E).